The chain runs to 227 residues: 7-cyano-7-deazaguanine synthase (227 aa).

8–18 (FSGGQDSTTCL) lines the ATP pocket. Cys-187, Cys-196, Cys-199, and Cys-202 together coordinate Zn(2+).

It belongs to the QueC family. Zn(2+) is required as a cofactor.

It catalyses the reaction 7-carboxy-7-deazaguanine + NH4(+) + ATP = 7-cyano-7-deazaguanine + ADP + phosphate + H2O + H(+). The protein operates within purine metabolism; 7-cyano-7-deazaguanine biosynthesis. Catalyzes the ATP-dependent conversion of 7-carboxy-7-deazaguanine (CDG) to 7-cyano-7-deazaguanine (preQ(0)). This Aliivibrio fischeri (strain MJ11) (Vibrio fischeri) protein is 7-cyano-7-deazaguanine synthase.